A 327-amino-acid polypeptide reads, in one-letter code: MSIMKSKIAKTLVVVVVAIAIFTLVLLMLWEGPLGTLTEENLTELNGEVPFRFKDSGSNEEGKDVTLSKFFVCLNKVLRSADDSLSSYLCCGETSEEEGESKKGKYVKNAITEARNMMFRVKDSKDVILEILKKGDKNRNELAETVSNAFSAVETSEGSDQESEGADEQGKIEKLNTALAELYIWIWLKGIPEEDKRTLQFRKTYKENQSVKNLLDGLDEENREVAESTILVKVGKKEDSMHVIEHILTSIFQANGYMEKGSIKQAYLSAKASVAAAGGSLGKKVSEVSDNEGKGLIDSLFGMIGWRNNSNNNSSVSKKKEEQGVNS.

A helical membrane pass occupies residues 12-32; that stretch reads LVVVVVAIAIFTLVLLMLWEG. Residues 149-170 are disordered; that stretch reads AFSAVETSEGSDQESEGADEQG. Residues 157–167 show a composition bias toward acidic residues; sequence EGSDQESEGAD. A coiled-coil region spans residues 162–227; it reads ESEGADEQGK…LDEENREVAE (66 aa).

Its subcellular location is the membrane. This is an uncharacterized protein from Encephalitozoon cuniculi (strain GB-M1) (Microsporidian parasite).